The following is a 505-amino-acid chain: Lysine--tRNA ligase (505 aa).

The Mg(2+) site is built by glutamate 415 and glutamate 422.

This sequence belongs to the class-II aminoacyl-tRNA synthetase family. Homodimer. Requires Mg(2+) as cofactor.

It is found in the cytoplasm. The catalysed reaction is tRNA(Lys) + L-lysine + ATP = L-lysyl-tRNA(Lys) + AMP + diphosphate. This is Lysine--tRNA ligase from Salmonella typhi.